The following is a 292-amino-acid chain: ATP synthase subunit a (292 aa).

A run of 7 helical transmembrane segments spans residues 39 to 59, 73 to 93, 102 to 122, 128 to 148, 172 to 192, 196 to 216, and 231 to 251; these read QILG…FYKL, FLLL…DLLG, YFLM…LGGI, SLTF…VMGI, TFIP…SISL, GNIL…IFIF, and VFAG…AGVL.

The protein belongs to the ATPase A chain family. F-type ATPases have 2 components, CF(1) - the catalytic core - and CF(0) - the membrane proton channel. CF(1) has five subunits: alpha(3), beta(3), gamma(1), delta(1), epsilon(1). CF(0) has three main subunits: a(1), b(2) and c(9-12). The alpha and beta chains form an alternating ring which encloses part of the gamma chain. CF(1) is attached to CF(0) by a central stalk formed by the gamma and epsilon chains, while a peripheral stalk is formed by the delta and b chains.

It is found in the cell membrane. Its function is as follows. Key component of the proton channel; it plays a direct role in the translocation of protons across the membrane. This is ATP synthase subunit a from Mycoplasma genitalium (strain ATCC 33530 / DSM 19775 / NCTC 10195 / G37) (Mycoplasmoides genitalium).